Here is a 379-residue protein sequence, read N- to C-terminus: Alcohol dehydrogenase 2 (379 aa).

Cys-47, Thr-49, His-69, Cys-99, Cys-102, Cys-105, Cys-113, and Cys-177 together coordinate Zn(2+). Positions 49 and 69 each coordinate an alcohol. Thr-49 lines the NAD(+) pocket. NAD(+) contacts are provided by residues Gly-202–Gly-207, Asp-226, Lys-231, Thr-272, Val-295, Val-295–Val-297, Phe-322, and Arg-372.

This sequence belongs to the zinc-containing alcohol dehydrogenase family. As to quaternary structure, homodimer. It depends on Zn(2+) as a cofactor.

The protein localises to the cytoplasm. The catalysed reaction is a primary alcohol + NAD(+) = an aldehyde + NADH + H(+). The enzyme catalyses a secondary alcohol + NAD(+) = a ketone + NADH + H(+). The protein is Alcohol dehydrogenase 2 (ADH2) of Zea mays (Maize).